The chain runs to 180 residues: ATP-dependent protease subunit HslV (180 aa).

The active site involves T2. 3 residues coordinate Na(+): G157, C160, and T163.

This sequence belongs to the peptidase T1B family. HslV subfamily. In terms of assembly, a double ring-shaped homohexamer of HslV is capped on each side by a ring-shaped HslU homohexamer. The assembly of the HslU/HslV complex is dependent on binding of ATP.

The protein localises to the cytoplasm. It catalyses the reaction ATP-dependent cleavage of peptide bonds with broad specificity.. Allosterically activated by HslU binding. In terms of biological role, protease subunit of a proteasome-like degradation complex believed to be a general protein degrading machinery. This is ATP-dependent protease subunit HslV from Tolumonas auensis (strain DSM 9187 / NBRC 110442 / TA 4).